Here is a 210-residue protein sequence, read N- to C-terminus: Large ribosomal subunit protein bL25 (210 aa).

The protein belongs to the bacterial ribosomal protein bL25 family. CTC subfamily. In terms of assembly, part of the 50S ribosomal subunit; part of the 5S rRNA/L5/L18/L25 subcomplex. Contacts the 5S rRNA. Binds to the 5S rRNA independently of L5 and L18.

In terms of biological role, this is one of the proteins that binds to the 5S RNA in the ribosome where it forms part of the central protuberance. This Frankia casuarinae (strain DSM 45818 / CECT 9043 / HFP020203 / CcI3) protein is Large ribosomal subunit protein bL25.